We begin with the raw amino-acid sequence, 194 residues long: Anthranilate synthase component 2 (194 aa).

Positions 2–194 (KIFFIDNFDS…QSVGFLEGLL (193 aa)) constitute a Glutamine amidotransferase type-1 domain. 57–59 (GPG) provides a ligand contact to L-glutamine. Cys-84 functions as the Nucleophile; for GATase activity in the catalytic mechanism. Residues Gln-88 and 134-135 (SL) each bind L-glutamine. Active-site for GATase activity residues include His-170 and Glu-172.

Heterotetramer consisting of two non-identical subunits: a beta subunit (TrpG) and a large alpha subunit (TrpE).

The enzyme catalyses chorismate + L-glutamine = anthranilate + pyruvate + L-glutamate + H(+). The protein operates within amino-acid biosynthesis; L-tryptophan biosynthesis; L-tryptophan from chorismate: step 1/5. Its function is as follows. Part of a heterotetrameric complex that catalyzes the two-step biosynthesis of anthranilate, an intermediate in the biosynthesis of L-tryptophan. In the first step, the glutamine-binding beta subunit (TrpG) of anthranilate synthase (AS) provides the glutamine amidotransferase activity which generates ammonia as a substrate that, along with chorismate, is used in the second step, catalyzed by the large alpha subunit of AS (TrpE) to produce anthranilate. In the absence of TrpG, TrpE can synthesize anthranilate directly from chorismate and high concentrations of ammonia. The polypeptide is Anthranilate synthase component 2 (trpG) (Helicobacter pylori (strain ATCC 700392 / 26695) (Campylobacter pylori)).